Reading from the N-terminus, the 170-residue chain is MKYSQNKSLNTFEIEYKIANKSVKIKSSGKMGVITKELKLKEPAIQSNNIYYLKNHGDSRIIIGTMKQQIQGVLAGFCIELKLVGLGFVVHKVGNTLVLDVGYSHYRSCLIPKEVVVKLEGSQIILYSINKEKVTTFASLLKTFKKINMYKGTGILGINEKIKLKKGKVR.

It belongs to the universal ribosomal protein uL6 family.

Its subcellular location is the mitochondrion. The polypeptide is Large ribosomal subunit protein uL6m (mrpl6) (Dictyostelium discoideum (Social amoeba)).